Here is a 383-residue protein sequence, read N- to C-terminus: Heme A synthase (383 aa).

Transmembrane regions (helical) follow at residues 38-58 (VRVWLMMLFGLVVIMIAVGGL), 127-147 (VIGLVWALGFFGFLVTRKIPP), 153-173 (LFLLGVLGGLQGAIGWWMVAS), 187-207 (LATHLGLAFFILGLIAWYIMV), 230-250 (ANWLMGLAAVQILLGALVAGI), 287-307 (LVQFNHRMVGYLLLLVGLYVW), 321-341 (AFDWVAVILFGQMVLGIVTVL), and 344-364 (APWTWAIAHQFGAVVTICLIL). His292 lines the heme pocket. Residue His352 coordinates heme.

Belongs to the COX15/CtaA family. Type 2 subfamily. Interacts with CtaB. The cofactor is heme b.

Its subcellular location is the cell membrane. The catalysed reaction is Fe(II)-heme o + 2 A + H2O = Fe(II)-heme a + 2 AH2. It functions in the pathway porphyrin-containing compound metabolism; heme A biosynthesis; heme A from heme O: step 1/1. In terms of biological role, catalyzes the conversion of heme O to heme A by two successive hydroxylations of the methyl group at C8. The first hydroxylation forms heme I, the second hydroxylation results in an unstable dihydroxymethyl group, which spontaneously dehydrates, resulting in the formyl group of heme A. In Dinoroseobacter shibae (strain DSM 16493 / NCIMB 14021 / DFL 12), this protein is Heme A synthase.